A 160-amino-acid polypeptide reads, in one-letter code: SsrA-binding protein (160 aa).

Belongs to the SmpB family.

Its subcellular location is the cytoplasm. In terms of biological role, required for rescue of stalled ribosomes mediated by trans-translation. Binds to transfer-messenger RNA (tmRNA), required for stable association of tmRNA with ribosomes. tmRNA and SmpB together mimic tRNA shape, replacing the anticodon stem-loop with SmpB. tmRNA is encoded by the ssrA gene; the 2 termini fold to resemble tRNA(Ala) and it encodes a 'tag peptide', a short internal open reading frame. During trans-translation Ala-aminoacylated tmRNA acts like a tRNA, entering the A-site of stalled ribosomes, displacing the stalled mRNA. The ribosome then switches to translate the ORF on the tmRNA; the nascent peptide is terminated with the 'tag peptide' encoded by the tmRNA and targeted for degradation. The ribosome is freed to recommence translation, which seems to be the essential function of trans-translation. The polypeptide is SsrA-binding protein (Pectobacterium atrosepticum (strain SCRI 1043 / ATCC BAA-672) (Erwinia carotovora subsp. atroseptica)).